Consider the following 120-residue polypeptide: Alpha-amylase inhibitor Haim-2 (120 aa).

The signal sequence occupies residues 1-32 (MKRYVCSTFVACVMVLCVIPASGAAAHEAVAE). Cystine bridges form between Cys43-Cys59 and Cys77-Cys104.

Its function is as follows. Inhibits mammalian alpha-amylases specifically but has no action on plant and microbial alpha-amylases. This is Alpha-amylase inhibitor Haim-2 from Streptomyces griseosporeus.